Reading from the N-terminus, the 331-residue chain is XylDLEGF operon transcriptional activator 3 (331 aa).

The 102-residue stretch at 214 to 315 folds into the HTH araC/xylS-type domain; sequence ERVVQFIEDN…GELPSDTLRR (102 aa). 2 consecutive DNA-binding regions (H-T-H motif) follow at residues 231–252 and 282–305; these read ERLA…EKHA and VTEM…RSTF.

The protein resides in the cytoplasm. Functionally, regulatory protein of the TOL plasmid xyl operons. XylS activates the xylXYZLTEGFJQKIH operon required for the degradation of toluene, m-xylene and p-xylene. In Pseudomonas putida (Arthrobacter siderocapsulatus), this protein is XylDLEGF operon transcriptional activator 3 (xylS3).